Reading from the N-terminus, the 434-residue chain is Gamma-glutamyl phosphate reductase (434 aa).

Polar residues predominate over residues 1-11 (MTNSNEAQENA). The tract at residues 1–26 (MTNSNEAQENALSPERQAERDEVLAK) is disordered. Residues 16–25 (RQAERDEVLA) are compositionally biased toward basic and acidic residues.

It belongs to the gamma-glutamyl phosphate reductase family.

It is found in the cytoplasm. It carries out the reaction L-glutamate 5-semialdehyde + phosphate + NADP(+) = L-glutamyl 5-phosphate + NADPH + H(+). It participates in amino-acid biosynthesis; L-proline biosynthesis; L-glutamate 5-semialdehyde from L-glutamate: step 2/2. Functionally, catalyzes the NADPH-dependent reduction of L-glutamate 5-phosphate into L-glutamate 5-semialdehyde and phosphate. The product spontaneously undergoes cyclization to form 1-pyrroline-5-carboxylate. The polypeptide is Gamma-glutamyl phosphate reductase (Corynebacterium jeikeium (strain K411)).